Here is a 509-residue protein sequence, read N- to C-terminus: 2,3-bisphosphoglycerate-independent phosphoglycerate mutase (509 aa).

Asp-11 lines the Mn(2+) pocket. Tyr-35 is modified (phosphotyrosine). Residue Ser-61 participates in Mn(2+) binding. The active-site Phosphoserine intermediate is Ser-61. Substrate is bound by residues His-122, 152–153 (RD), Arg-184, Arg-190, 260–263 (RPDR), and Lys-335. Asp-402, His-406, Asp-443, His-444, and His-461 together coordinate Mn(2+).

The protein belongs to the BPG-independent phosphoglycerate mutase family. As to quaternary structure, monomer. It depends on Mn(2+) as a cofactor.

It catalyses the reaction (2R)-2-phosphoglycerate = (2R)-3-phosphoglycerate. It functions in the pathway carbohydrate degradation; glycolysis; pyruvate from D-glyceraldehyde 3-phosphate: step 3/5. Essential for rapid growth and for sporulation. Catalyzes the interconversion of 2-phosphoglycerate and 3-phosphoglycerate. This chain is 2,3-bisphosphoglycerate-independent phosphoglycerate mutase, found in Bacillus anthracis.